The primary structure comprises 2000 residues: Myosin-14 (2000 aa).

Residue A2 is modified to N-acetylalanine. A Phosphothreonine modification is found at T33. One can recognise a Myosin N-terminal SH3-like domain in the interval 47–97 (TARRMVWVPSELHGFEAAALRDEGEEEAEVELAESGRRLRLPRDQIQRMNP). S56 bears the Phosphoserine mark. In terms of domain architecture, Myosin motor spans 101 to 804 (SKAEDMAELT…VLAQLEEERD (704 aa)). 194-201 (GESGAGKT) provides a ligand contact to ATP. The tract at residues 682-704 (LSRLMATLSNTNPSFVRCIVPNH) is actin-binding. In terms of domain architecture, IQ spans 807 to 836 (VTDIIVSFQAAARGYLARRAFQRRQQQQSA). Positions 866–1951 (LQVTRQDEVL…VTTLRNRLRR (1086 aa)) form a coiled coil. Position 925 is a phosphoserine (S925). Residues 1173 to 1197 (RGELEDTLDSTNAQQELRSKREQEV) are disordered. Residue T1198 is modified to Phosphothreonine. Phosphoserine is present on residues S1249 and S1280. 5 disordered regions span residues 1260–1311 (ELSS…AELE), 1597–1629 (HERDLQGRDDAGEERRRQLAKQLRDAEVERDEE), 1720–1751 (SDRARRQAQQDRDEMAEEVASGNLSKAATLEE), 1910–1942 (AEEEASRAQAGRRRLQRELEDVTESAESMNREV), and 1967–2000 (LEEGVASDEEEAEGAEPGSAPGQEPEAPPPATPQ). Over residues 1290–1304 (SDSERARSEAAEKLQ) the composition is skewed to basic and acidic residues. Over residues 1720 to 1732 (SDRARRQAQQDRD) the composition is skewed to basic and acidic residues. The segment covering 1971 to 1980 (VASDEEEAEG) has biased composition (acidic residues). Phosphoserine is present on residues S1973 and S1985. Residues 1981–1991 (AEPGSAPGQEP) show a composition bias toward low complexity. A Phosphothreonine modification is found at T1998.

This sequence belongs to the TRAFAC class myosin-kinesin ATPase superfamily. Myosin family. In terms of assembly, myosin is a hexameric protein that consists of 2 heavy chain subunits (MHC), 2 alkali light chain subunits (MLC) and 2 regulatory light chain subunits (MLC-2). Highest levels in lung, kidney, brain and colon, very low levels in liver and bladder and no expression in spleen or seminal vesicle (at protein level). Isoform 1 is expressed in liver, kidney and testis with low levels in skeletal muscle and heart. Isoform 1 and isoform 2 are expressed in brain and lung. Isoform 2 is the main isoform expressed in skeletal muscle and heart. Isoform 3 is limited to brain stem, cerebellum and spinal cord.

In terms of biological role, cellular myosin that appears to play a role in cytokinesis, cell shape, and specialized functions such as secretion and capping. The polypeptide is Myosin-14 (Myh14) (Mus musculus (Mouse)).